The sequence spans 2778 residues: Probable ubiquitin carboxyl-terminal hydrolase FAF (2778 aa).

The interval 1–85 (MTFDTRRHTT…SQSSDDVAAS (85 aa)) is disordered. Low complexity predominate over residues 10–39 (TGQPGSTAPSSSSSTTSTTTTTTSPAQSAG). Over residues 71 to 85 (QPATDSQSSDDVAAS) the composition is skewed to polar residues. Residue serine 924 is modified to Phosphoserine. Positions 1065 to 1094 (GTGLASSPDSSSDSSTGSPPRPCPDMQRVE) are disordered. Residues 1070-1082 (SSPDSSSDSSTGS) are compositionally biased toward low complexity. The 395-residue stretch at 1668–2062 (CGLKNAGATC…NAYMLFYTRC (395 aa)) folds into the USP domain. The active-site Nucleophile is cysteine 1677. Catalysis depends on histidine 1986, which acts as the Proton acceptor. 2 disordered regions span residues 2568 to 2632 (VSEK…GDSN) and 2644 to 2691 (AYTS…INGL). Low complexity-rich tracts occupy residues 2614 to 2627 (TPTT…AWPA) and 2644 to 2671 (AYTS…GSGA). The segment covering 2672 to 2691 (NSETESSAQETTGETTINGL) has biased composition (polar residues).

Belongs to the peptidase C19 family. In terms of assembly, interacts with imd. Post-translationally, ubiquitinated. Ubiquitination is enhanced by the expression of imd. As to expression, eye disks and ovaries. Expressed in larval fat body.

The catalysed reaction is Thiol-dependent hydrolysis of ester, thioester, amide, peptide and isopeptide bonds formed by the C-terminal Gly of ubiquitin (a 76-residue protein attached to proteins as an intracellular targeting signal).. Its function is as follows. Ubiquitin C-terminal hydrolase involved in development and the imd/NF-kappa-B (IMD) signaling cascade. Required for eye and embryo development, and plays a role in compound eye assembly and oogenesis respectively. In the larval eye disks, cells outside the assembling facets require this protein for short-range cell interactions that prevent the mystery cells from becoming photoreceptors. Also required for nuclear migration and cellularization in early embryogenesis and could play a role in pole cell determination, development or function. Regulates the IMD signaling cascade at later stages of infection (around 6 hours post-infection) by inhibiting the expression of the antimicrobial peptides Dpt and Dro. Acts by modulating the state of imd polyubiquitination and/or stability; a function which appears to be independent of its enzymatic activity. In turn, imd enhances the polyubiquitination and stability of faf suggesting that they may form a regulatory feedback mechanism within the Imd pathway. This is Probable ubiquitin carboxyl-terminal hydrolase FAF (faf) from Drosophila melanogaster (Fruit fly).